The primary structure comprises 426 residues: Histidine--tRNA ligase (426 aa).

Belongs to the class-II aminoacyl-tRNA synthetase family.

Its subcellular location is the cytoplasm. It carries out the reaction tRNA(His) + L-histidine + ATP = L-histidyl-tRNA(His) + AMP + diphosphate + H(+). The polypeptide is Histidine--tRNA ligase (Saccharolobus solfataricus (strain ATCC 35092 / DSM 1617 / JCM 11322 / P2) (Sulfolobus solfataricus)).